We begin with the raw amino-acid sequence, 226 residues long: Transcription factor bHLH115 (226 aa).

In terms of domain architecture, bHLH spans 66 to 117 (TGSNSKACREKQRRDRLNDKFTELSSVLEPGRTPKTDKVAIINDAIRMVNQA).

As to quaternary structure, homodimer. Interacts with BTS and BHLH47/PYE.

It is found in the nucleus. This is Transcription factor bHLH115 (BHLH115) from Arabidopsis thaliana (Mouse-ear cress).